Reading from the N-terminus, the 469-residue chain is Pancreatic lipase-related protein 2 (469 aa).

An N-terminal signal peptide occupies residues 1-17 (MLPSWTIGLLLLATVRG). An intrachain disulfide couples C21 to C27. N-linked (GlcNAc...) asparagine glycosylation occurs at N71. The interval 93–105 (IHGFIDDGDSGWP) is required for galactolipase activity. A disulfide bridge links C109 with C120. The active-site Nucleophile is S171. The Charge relay system role is filled by D195. Ca(2+) contacts are provided by E206, R209, D211, and D214. Residues C256 and C280 are joined by a disulfide bond. The required for galactolipase activity stretch occupies residues 257-279 (QKNILSTIIDINGIWQGIQDFVA). The active-site Charge relay system is H282. 2 disulfide bridges follow: C304/C315 and C318/C323. N-linked (GlcNAc...) asparagine glycans are attached at residues N353, N399, and N455. The PLAT domain occupies 357–469 (WRYRVSVTLA…ENALQTLYPC (113 aa)). C453 and C469 form a disulfide bridge.

It belongs to the AB hydrolase superfamily. Lipase family.

It is found in the secreted. The protein resides in the zymogen granule membrane. It localises to the cell projection. The protein localises to the neuron projection. The catalysed reaction is a triacylglycerol + H2O = a diacylglycerol + a fatty acid + H(+). It carries out the reaction a 1,2-diacyl-3-O-(beta-D-galactosyl)-sn-glycerol + 2 H2O = 3-beta-D-galactosyl-sn-glycerol + 2 a fatty acid + 2 H(+). The enzyme catalyses 1,2,3-tri-(9Z-octadecenoyl)-glycerol + H2O = di-(9Z)-octadecenoylglycerol + (9Z)-octadecenoate + H(+). It catalyses the reaction di-(9Z)-octadecenoylglycerol + H2O = (9Z-octadecenoyl)-glycerol + (9Z)-octadecenoate + H(+). The catalysed reaction is (9Z-octadecenoyl)-glycerol + H2O = glycerol + (9Z)-octadecenoate + H(+). It carries out the reaction 1-(9Z-octadecenoyl)-glycerol + H2O = glycerol + (9Z)-octadecenoate + H(+). The enzyme catalyses 1,2,3-tripropanoylglycerol + H2O = dipropanoylglycerol + propanoate + H(+). It catalyses the reaction 1,2,3-tributanoylglycerol + H2O = dibutanoylglycerol + butanoate + H(+). The catalysed reaction is 1,2,3-trioctanoylglycerol + H2O = dioctanoylglycerol + octanoate + H(+). It carries out the reaction 1,2-didecanoylglycerol + H2O = decanoylglycerol + decanoate + H(+). The enzyme catalyses long chain 1,2-diacyl-3-O-beta-D-galactosyl-sn-glycerol + H2O = long chain acyl-3-O-beta-D-galactosyl-sn-glycerol + a fatty acid + H(+). It catalyses the reaction 1,2-dioctanoyl-3-O-beta-D-galactosyl-sn-glycerol + H2O = octanoyl-3-(beta-D-galactosyl)-sn-glycerol + octanoate + H(+). The catalysed reaction is 1,2-didodecanoyl-3-beta-D-galactosyl-sn-glycerol + H2O = dodecanoyl-3-beta-D-galactosyl-sn-glycerol + dodecanoate + H(+). It carries out the reaction 1-beta-D-galactosyl-2,3-didodecanoyl-sn-glycerol + H2O = 1-beta-D-galactosyl-dodecanoyl-sn-glycerol + dodecanoate + H(+). The enzyme catalyses a 1,2-diacyl-3-O-[alpha-D-galactosyl-(1-&gt;6)-beta-D-galactosyl]-sn-glycerol + H2O = acyl-3-O-[alpha-D-galactosyl-(1-&gt;6)-beta-D-galactosyl]-sn-glycerol + a fatty acid + H(+). It catalyses the reaction long chain 1,2-diacyl-3-O-[alpha-D-galactosyl-(1-&gt;6)-beta-D-galactosyl]-sn-glycerol + H2O = long chain acyl-3-O-[alpha-D-galactosyl-(1-&gt;6)-beta-D-galactosyl]-sn-glycerol + a fatty acid + H(+). The catalysed reaction is 1,2-dioctanoyl-3-O-[alpha-D-galactosyl-(1-&gt;6)-beta-D-galactosyl]-sn-glycerol + H2O = octanoyl-3-O-[alpha-D-galactosyl-(1-&gt;6)-beta-D-galactosyl]-sn-glycerol + octanoate + H(+). It carries out the reaction 1,2-didodecanoyl-3-O-[alpha-D-galactosyl-(1-&gt;6)-beta-D-galactosyl]-sn-glycerol + H2O = dodecanoyl-3-O-[alpha-D-galactosyl-(1-&gt;6)-beta-D-galactosyl]-sn-glycerol + dodecanoate + H(+). The enzyme catalyses a 1,2-diacyl-sn-glycero-3-phosphocholine + H2O = a monoacyl-sn-glycero-3-phosphocholine + a fatty acid + H(+). It functions in the pathway glycerolipid metabolism; triacylglycerol degradation. Its pathway is glycolipid metabolism. In terms of biological role, lipase that primarily hydrolyzes triglycerides and galactosylglycerides. In neonates, may play a major role in pancreatic digestion of dietary fats such as milk fat globules enriched in long-chain triglycerides. Hydrolyzes short-, medium- and long-chain fatty acyls in triglycerides without apparent positional specificity. Can completely deacylate triacylglycerols. When the liver matures and bile salt synthesis increases, likely functions mainly as a galactolipase and monoacylglycerol lipase. Hydrolyzes monogalactosyldiglycerols (MGDG) and digalactosyldiacylglycerols (DGDG) present in a plant-based diet, releasing long-chain polyunsaturated fatty acids. Hydrolyzes medium- and long-chain fatty acyls in galactolipids. May act together with LIPF to hydrolyze partially digested triglycerides. Hydrolyzes long-chain monoglycerides with high efficiency. In cytotoxic T cells, contributes to perforin-dependent cell lysis, but is unlikely to mediate direct cytotoxicity. Also has low phospholipase activity. In neurons, required for the localization of the phospholipid 1-oleoyl-2-palmitoyl-PC (OPPC) to neurite tips through acyl chain remodeling of membrane phospholipids. The resulting OPPC-rich lipid membrane domain recruits the t-SNARE protein STX4 by selectively interacting with the STX4 transmembrane domain and this promotes surface expression of the dopamine transporter SLC6A3/DAT at neurite tips by facilitating fusion of SLC6A3-containing transport vesicles with the plasma membrane. In Bos taurus (Bovine), this protein is Pancreatic lipase-related protein 2.